A 196-amino-acid chain; its full sequence is Imidazoleglycerol-phosphate dehydratase (196 aa).

This sequence belongs to the imidazoleglycerol-phosphate dehydratase family.

Its subcellular location is the cytoplasm. It carries out the reaction D-erythro-1-(imidazol-4-yl)glycerol 3-phosphate = 3-(imidazol-4-yl)-2-oxopropyl phosphate + H2O. Its pathway is amino-acid biosynthesis; L-histidine biosynthesis; L-histidine from 5-phospho-alpha-D-ribose 1-diphosphate: step 6/9. The chain is Imidazoleglycerol-phosphate dehydratase from Clostridium novyi (strain NT).